A 420-amino-acid chain; its full sequence is Glutamyl-tRNA reductase (420 aa).

Residues Thr-49–Arg-52, Ser-107, Glu-112–Gln-114, and Gln-118 contribute to the substrate site. The active-site Nucleophile is Cys-50. Position 187-192 (Gly-187–Ile-192) interacts with NADP(+).

The protein belongs to the glutamyl-tRNA reductase family. Homodimer.

The enzyme catalyses (S)-4-amino-5-oxopentanoate + tRNA(Glu) + NADP(+) = L-glutamyl-tRNA(Glu) + NADPH + H(+). It functions in the pathway porphyrin-containing compound metabolism; protoporphyrin-IX biosynthesis; 5-aminolevulinate from L-glutamyl-tRNA(Glu): step 1/2. Catalyzes the NADPH-dependent reduction of glutamyl-tRNA(Glu) to glutamate 1-semialdehyde (GSA). This chain is Glutamyl-tRNA reductase, found in Methylococcus capsulatus (strain ATCC 33009 / NCIMB 11132 / Bath).